The following is a 72-amino-acid chain: Putative membrane protein insertion efficiency factor (72 aa).

This sequence belongs to the UPF0161 family.

It localises to the cell inner membrane. Could be involved in insertion of integral membrane proteins into the membrane. The sequence is that of Putative membrane protein insertion efficiency factor from Myxococcus xanthus (strain DK1622).